The sequence spans 418 residues: Trans-acting enoyl reductase (418 aa).

This sequence belongs to the saccharopine dehydrogenase family. Enoyl reductase subfamily.

Involved in the reduction of the double bond between C-4 and C-5 during phthiocerol dimycocerosates (DIM A) and glycosylated phenolphthiocerol dimycocerosates (PGL) biosynthesis. This is Trans-acting enoyl reductase from Mycobacterium leprae (strain TN).